Consider the following 45-residue polypeptide: Omega-hexatoxin-Hv2a (45 aa).

3 disulfides stabilise this stretch: cysteine 4–cysteine 18, cysteine 11–cysteine 24, and cysteine 17–cysteine 29.

Belongs to the neurotoxin 15 family. 02 (omega-actx) subfamily. Expressed by the venom gland.

Its subcellular location is the secreted. Its function is as follows. Potent inhibitor of insect (bee brain), but not mammalian (rat trigeminal neurons), voltage-gated calcium channels (Cav). In vivo, injection into lone star ticks (Amblyomma americanum) induces curling of all eight legs into closed loops, followed by death. The sequence is that of Omega-hexatoxin-Hv2a from Hadronyche versuta (Blue mountains funnel-web spider).